Consider the following 226-residue polypeptide: tRNA (guanine-N(1)-)-methyltransferase (226 aa).

S-adenosyl-L-methionine is bound by residues glycine 112 and 132-137 (IGDYVL).

The protein belongs to the RNA methyltransferase TrmD family. As to quaternary structure, homodimer.

Its subcellular location is the cytoplasm. The catalysed reaction is guanosine(37) in tRNA + S-adenosyl-L-methionine = N(1)-methylguanosine(37) in tRNA + S-adenosyl-L-homocysteine + H(+). Its function is as follows. Specifically methylates guanosine-37 in various tRNAs. The chain is tRNA (guanine-N(1)-)-methyltransferase from Christiangramia forsetii (strain DSM 17595 / CGMCC 1.15422 / KT0803) (Gramella forsetii).